The chain runs to 89 residues: Small ribosomal subunit protein uS15 (89 aa).

This sequence belongs to the universal ribosomal protein uS15 family. As to quaternary structure, part of the 30S ribosomal subunit. Forms a bridge to the 50S subunit in the 70S ribosome, contacting the 23S rRNA.

One of the primary rRNA binding proteins, it binds directly to 16S rRNA where it helps nucleate assembly of the platform of the 30S subunit by binding and bridging several RNA helices of the 16S rRNA. Its function is as follows. Forms an intersubunit bridge (bridge B4) with the 23S rRNA of the 50S subunit in the ribosome. The sequence is that of Small ribosomal subunit protein uS15 from Parafrankia sp. (strain EAN1pec).